Here is a 112-residue protein sequence, read N- to C-terminus: Divalent-cation tolerance protein CutA (112 aa).

Cu cation contacts are provided by Cys16, His83, and His84.

Belongs to the CutA family. Homotrimer. Requires Cu cation as cofactor.

The protein resides in the cytoplasm. Involved in resistance toward heavy metals. This chain is Divalent-cation tolerance protein CutA, found in Shigella boydii serotype 18 (strain CDC 3083-94 / BS512).